The sequence spans 586 residues: Major facilitator superfamily domain-containing protein 6-like (586 aa).

2 consecutive transmembrane segments (helical) span residues 50–70 (TLMGTKHLIAAFWAPVCAFLA) and 78–98 (ALLIGSLLGSVGASLLMVLVP). Residues 133 to 160 (AQESASSHPAKRTAEVEMPGFRNPPGES) form a disordered region. 9 helical membrane-spanning segments follow: residues 246-266 (FILSLGSVAFWELLTAPLEQV), 287-307 (LWVWRLLGMSAGVCGITALVG), 326-346 (GYSVVSTLALLVSIAFPIPIC), 361-381 (IVGGDPHLILLASTTVLVGAI), 400-420 (ELVMGFSVALSLLGEILLHPF), 433-455 (LVGLGLSCLAGQLLYYSFLWSWW), 456-476 (SVLPIQILSAISNRALWWAVG), 499-519 (FYGSGCSLGSFVGGFVVMRFS), and 521-541 (AVLYQACCVALLLWLALLLSI).

This sequence belongs to the major facilitator superfamily. MFSD6 family.

It localises to the membrane. The polypeptide is Major facilitator superfamily domain-containing protein 6-like (MFSD6L) (Homo sapiens (Human)).